We begin with the raw amino-acid sequence, 55 residues long: Sporulation killing factor (55 aa).

Residues 1–29 constitute a propeptide that is removed on maturation; sequence MKRNQKEWESVSKKGLMKPGGTSIVKAAG. Cys-30 and Cys-45 form a disulfide bridge. A cross-link (cyclopeptide (Cys-Ile)) is located at residues 30–55; it reads CMGCWASKSIAMTRVCALPHPAMRAI. The segment at residues 33–41 is a cross-link (2-(S-cysteinyl)-methionine (Cys-Met)); the sequence is CWASKSIAM.

This is a cyclic peptide. The first step in SKF maturation is probably thioether bond formation.

It is found in the secreted. In terms of biological role, produces a 26-residue extracellular sporulation killing factor (SKF) that induces the lysis of other B.subtilis cells that have not entered the sporulation pathway, providing a source of nutrients to support sporulation, and at the same time delaying commitment to the energetically expensive and irreversible onset of sporulation. Can also inhibit growth of other bacteria at high concentrations. Addition of SKF to solid cultures induces killing, but it is much less effective than SDP (AC O34344). Has a role in protecting the secreted lipase LipA against proteolysis, either by modulating its folding or by acting as a protease inhibitor. In Bacillus subtilis (strain 168), this protein is Sporulation killing factor.